A 68-amino-acid chain; its full sequence is Large ribosomal subunit protein uL29 (68 aa).

This sequence belongs to the universal ribosomal protein uL29 family.

The protein is Large ribosomal subunit protein uL29 of Chlorobaculum tepidum (strain ATCC 49652 / DSM 12025 / NBRC 103806 / TLS) (Chlorobium tepidum).